Reading from the N-terminus, the 251-residue chain is Sec-independent protein translocase protein TatC (251 aa).

6 helical membrane passes run 23-43 (AFII…SFLL), 73-93 (SAFT…YLFI), 104-124 (IIAF…IFVF), 159-179 (LVIH…VIIV), 197-217 (IAVV…ILSQ), and 218-238 (FALA…CNFI).

The protein belongs to the TatC family. The Tat system comprises two distinct complexes: a TatABC complex, containing multiple copies of TatA, TatB and TatC subunits, and a separate TatA complex, containing only TatA subunits. Substrates initially bind to the TatABC complex, which probably triggers association of the separate TatA complex to form the active translocon.

Its subcellular location is the cell inner membrane. Its function is as follows. Part of the twin-arginine translocation (Tat) system that transports large folded proteins containing a characteristic twin-arginine motif in their signal peptide across membranes. Together with TatB, TatC is part of a receptor directly interacting with Tat signal peptides. This chain is Sec-independent protein translocase protein TatC, found in Rickettsia prowazekii (strain Madrid E).